Consider the following 513-residue polypeptide: GMP synthase [glutamine-hydrolyzing] (513 aa).

In terms of domain architecture, Glutamine amidotransferase type-1 spans 7 to 198; it reads LIVVVDFGGQ…LFNIAGCRGD (192 aa). C84 serves as the catalytic Nucleophile. Catalysis depends on residues H172 and E174. One can recognise a GMPS ATP-PPase domain in the interval 199 to 388; sequence WTTESFITRQ…LGVPEEIVGR (190 aa). 226–232 is a binding site for ATP; it reads SGGVDSS.

In terms of assembly, homodimer.

The enzyme catalyses XMP + L-glutamine + ATP + H2O = GMP + L-glutamate + AMP + diphosphate + 2 H(+). Its pathway is purine metabolism; GMP biosynthesis; GMP from XMP (L-Gln route): step 1/1. In terms of biological role, catalyzes the synthesis of GMP from XMP. This chain is GMP synthase [glutamine-hydrolyzing], found in Symbiobacterium thermophilum (strain DSM 24528 / JCM 14929 / IAM 14863 / T).